A 247-amino-acid chain; its full sequence is NADH dehydrogenase [ubiquinone] flavoprotein 2, mitochondrial (247 aa).

Residues 1–40 (MFRSLLKRTTFLNQLNKSNGFNRNYFKQSTLTRSDALSRH) constitute a mitochondrion transit peptide. Cys135, Cys140, Cys176, and Cys180 together coordinate [2Fe-2S] cluster. Positions 211–247 (NKPTKIGPQTHRKAAEGPQGKTTLLEPPVGPTCRDDL) are disordered.

This sequence belongs to the complex I 24 kDa subunit family. As to quaternary structure, complex I is composed of 45 different subunits. This is a component of the flavoprotein-sulfur (FP) fragment of the enzyme. The cofactor is [2Fe-2S] cluster.

Its subcellular location is the mitochondrion inner membrane. It catalyses the reaction a ubiquinone + NADH + 5 H(+)(in) = a ubiquinol + NAD(+) + 4 H(+)(out). Functionally, core subunit of the mitochondrial membrane respiratory chain NADH dehydrogenase (Complex I) that is believed to belong to the minimal assembly required for catalysis. Complex I functions in the transfer of electrons from NADH to the respiratory chain. The immediate electron acceptor for the enzyme is believed to be ubiquinone. The chain is NADH dehydrogenase [ubiquinone] flavoprotein 2, mitochondrial (ndufv2) from Dictyostelium discoideum (Social amoeba).